A 245-amino-acid chain; its full sequence is 4-hydroxy-tetrahydrodipicolinate reductase (245 aa).

Residues 7–12 (GARGKV), 75–77 (GTT), and 102–105 (APNF) each bind NAD(+). The active-site Proton donor/acceptor is His132. (S)-2,3,4,5-tetrahydrodipicolinate is bound at residue His133. Lys136 acts as the Proton donor in catalysis. A (S)-2,3,4,5-tetrahydrodipicolinate-binding site is contributed by 142–143 (GT).

This sequence belongs to the DapB family.

The protein localises to the cytoplasm. The catalysed reaction is (S)-2,3,4,5-tetrahydrodipicolinate + NAD(+) + H2O = (2S,4S)-4-hydroxy-2,3,4,5-tetrahydrodipicolinate + NADH + H(+). The enzyme catalyses (S)-2,3,4,5-tetrahydrodipicolinate + NADP(+) + H2O = (2S,4S)-4-hydroxy-2,3,4,5-tetrahydrodipicolinate + NADPH + H(+). The protein operates within amino-acid biosynthesis; L-lysine biosynthesis via DAP pathway; (S)-tetrahydrodipicolinate from L-aspartate: step 4/4. Catalyzes the conversion of 4-hydroxy-tetrahydrodipicolinate (HTPA) to tetrahydrodipicolinate. The sequence is that of 4-hydroxy-tetrahydrodipicolinate reductase from Mycolicibacterium smegmatis (strain ATCC 700084 / mc(2)155) (Mycobacterium smegmatis).